The sequence spans 398 residues: Acetate kinase (398 aa).

Position 8 (Asn-8) interacts with Mg(2+). Lys-15 contributes to the ATP binding site. Substrate is bound at residue Arg-89. Asp-146 functions as the Proton donor/acceptor in the catalytic mechanism. Residues 206-210 (HIGNG), 283-285 (DMR), and 331-335 (GMGEN) contribute to the ATP site. Residue Glu-383 participates in Mg(2+) binding.

It belongs to the acetokinase family. As to quaternary structure, homodimer. Mg(2+) is required as a cofactor. Requires Mn(2+) as cofactor.

It localises to the cytoplasm. It catalyses the reaction acetate + ATP = acetyl phosphate + ADP. It participates in metabolic intermediate biosynthesis; acetyl-CoA biosynthesis; acetyl-CoA from acetate: step 1/2. Catalyzes the formation of acetyl phosphate from acetate and ATP. Can also catalyze the reverse reaction. The protein is Acetate kinase of Streptococcus pyogenes serotype M2 (strain MGAS10270).